Reading from the N-terminus, the 192-residue chain is Shikimate kinase (192 aa).

15-20 (GAGKTT) is a binding site for ATP. Threonine 19 contacts Mg(2+). Positions 37, 61, and 83 each coordinate substrate. Arginine 121 provides a ligand contact to ATP. Residue arginine 140 coordinates substrate.

Belongs to the shikimate kinase family. As to quaternary structure, monomer. It depends on Mg(2+) as a cofactor.

The protein localises to the cytoplasm. It carries out the reaction shikimate + ATP = 3-phosphoshikimate + ADP + H(+). Its pathway is metabolic intermediate biosynthesis; chorismate biosynthesis; chorismate from D-erythrose 4-phosphate and phosphoenolpyruvate: step 5/7. In terms of biological role, catalyzes the specific phosphorylation of the 3-hydroxyl group of shikimic acid using ATP as a cosubstrate. The chain is Shikimate kinase from Cupriavidus pinatubonensis (strain JMP 134 / LMG 1197) (Cupriavidus necator (strain JMP 134)).